Reading from the N-terminus, the 427-residue chain is Serine--tRNA ligase (427 aa).

230-232 (TSE) contacts L-serine. ATP-binding positions include 260–262 (RRE) and Val276. Glu283 provides a ligand contact to L-serine. 347-350 (ELTS) contacts ATP. Thr387 lines the L-serine pocket.

This sequence belongs to the class-II aminoacyl-tRNA synthetase family. Type-1 seryl-tRNA synthetase subfamily. As to quaternary structure, homodimer. The tRNA molecule binds across the dimer.

Its subcellular location is the cytoplasm. It catalyses the reaction tRNA(Ser) + L-serine + ATP = L-seryl-tRNA(Ser) + AMP + diphosphate + H(+). The enzyme catalyses tRNA(Sec) + L-serine + ATP = L-seryl-tRNA(Sec) + AMP + diphosphate + H(+). Its pathway is aminoacyl-tRNA biosynthesis; selenocysteinyl-tRNA(Sec) biosynthesis; L-seryl-tRNA(Sec) from L-serine and tRNA(Sec): step 1/1. Functionally, catalyzes the attachment of serine to tRNA(Ser). Is also able to aminoacylate tRNA(Sec) with serine, to form the misacylated tRNA L-seryl-tRNA(Sec), which will be further converted into selenocysteinyl-tRNA(Sec). The sequence is that of Serine--tRNA ligase from Micrococcus luteus (strain ATCC 4698 / DSM 20030 / JCM 1464 / CCM 169 / CCUG 5858 / IAM 1056 / NBRC 3333 / NCIMB 9278 / NCTC 2665 / VKM Ac-2230) (Micrococcus lysodeikticus).